Here is a 179-residue protein sequence, read N- to C-terminus: Gamma-crystallin S (179 aa).

Residue Ser2 is modified to N-acetylserine. The tract at residues 2 to 5 (SKTG) is N-terminal arm. Beta/gamma crystallin 'Greek key' domains follow at residues 6 to 44 (TKITFYEDKNFQGRRYDCDCDCSDFHTYLSRCNSIRVEG) and 45 to 87 (GTWA…RALH). A connecting peptide region spans residues 88–93 (LSSGGQ). 2 consecutive Beta/gamma crystallin 'Greek key' domains span residues 94–134 (YKIQ…KVLD) and 135–177 (GAWI…RRIV).

This sequence belongs to the beta/gamma-crystallin family. As to quaternary structure, monomer.

In terms of biological role, crystallins are the dominant structural components of the vertebrate eye lens. The sequence is that of Gamma-crystallin S (CRYGS) from Oryctolagus cuniculus (Rabbit).